A 386-amino-acid chain; its full sequence is Probable mannan endo-1,4-beta-mannosidase A (386 aa).

An N-terminal signal peptide occupies residues 1–21 (MKLNPSLLTAAGLVSAQLASA). 2 residues coordinate substrate: W95 and N207. The Proton donor role is filled by E208. Y283 is a binding site for substrate. The active-site Nucleophile is the E316. A glycan (N-linked (GlcNAc...) asparagine) is linked at N336. Residue W346 coordinates substrate.

This sequence belongs to the glycosyl hydrolase 5 (cellulase A) family.

It is found in the secreted. The enzyme catalyses Random hydrolysis of (1-&gt;4)-beta-D-mannosidic linkages in mannans, galactomannans and glucomannans.. Functionally, endo-1,4-mannanase, a crucial enzyme for depolymerization of seed galactomannans and wood galactoglucomannans. This is Probable mannan endo-1,4-beta-mannosidase A (manA) from Aspergillus flavus (strain ATCC 200026 / FGSC A1120 / IAM 13836 / NRRL 3357 / JCM 12722 / SRRC 167).